Consider the following 270-residue polypeptide: Diaminopimelate epimerase (270 aa).

The substrate site is built by Asn15, Gln49, and Asn66. Catalysis depends on Cys75, which acts as the Proton donor. Residues 76–77 (GN), Asn155, Asn187, and 204–205 (ER) each bind substrate. The active-site Proton acceptor is the Cys213. 214-215 (GS) lines the substrate pocket.

It belongs to the diaminopimelate epimerase family. As to quaternary structure, homodimer.

It localises to the cytoplasm. It carries out the reaction (2S,6S)-2,6-diaminopimelate = meso-2,6-diaminopimelate. It participates in amino-acid biosynthesis; L-lysine biosynthesis via DAP pathway; DL-2,6-diaminopimelate from LL-2,6-diaminopimelate: step 1/1. Functionally, catalyzes the stereoinversion of LL-2,6-diaminopimelate (L,L-DAP) to meso-diaminopimelate (meso-DAP), a precursor of L-lysine and an essential component of the bacterial peptidoglycan. In Rickettsia africae (strain ESF-5), this protein is Diaminopimelate epimerase.